The following is a 569-amino-acid chain: Linoleate hydratase (569 aa).

Tyr-87 serves as a coordination point for FAD. The active-site Proton donor is Tyr-205. FAD is bound by residues Val-254, Ser-300, and Thr-524.

This sequence belongs to the oleate hydratase family. FAD serves as cofactor.

It localises to the cell membrane. The protein localises to the cytoplasm. The enzyme catalyses (9Z,12Z)-octadecadienoate + H2O = (10S)-hydroxy-(12Z)-octadecenoate. The catalysed reaction is (10E,12Z)-octadecadienoate + H2O = (10S)-hydroxy-(12Z)-octadecenoate. It catalyses the reaction (9Z)-octadecenoate + H2O = 10-hydroxyoctadecanoate. It carries out the reaction (10E)-octadecenoate + H2O = 10-hydroxyoctadecanoate. The enzyme catalyses (9E,11E)-octadecadienoate + H2O = 10-hydroxy-(11E)-octadecenoate. The catalysed reaction is (9Z,11E)-octadecadienoate + H2O = 10-hydroxy-(11E)-octadecenoate. It catalyses the reaction (9Z)-hexadecenoate + H2O = 10-hydroxyhexadecanoate. It carries out the reaction (9Z,12Z,15Z)-octadecatrienoate + H2O = (10S)-hydroxy-(12Z,15Z)-octadecadienoate. The enzyme catalyses (6Z,9Z,12Z)-octadecatrienoate + H2O = (10S)-hydroxy-(6Z,12Z)-octadecadienoate. The catalysed reaction is (6Z,9Z,12Z,15Z)-octadecatetraenoate + H2O = (10S)-hydroxy-(6Z,12Z,15Z)-octadecatrienoate. It participates in lipid metabolism; fatty acid metabolism. The addition of NADH or NADPH highly increases catalytic activity, likely by reducing the cofactor FAD to FADH2. The hydration and dehydration reactions are strongly inhibited by Ag(+), Fe(2+), Cu(2+), Zn(2+), Hg(2+), and Fe(3+). Its function is as follows. Is involved in a saturation metabolic pathway of polyunsaturated fatty acids, that detoxifies unsaturated fatty acids and generates hydroxy fatty acids, oxo fatty acids, conjugated fatty acids such as conjugated linoleic acids (CLAs), and partially saturated trans-fatty acids as intermediates. CLA-HY catalyzes the hydration and dehydration steps in the production of 10-hydroxy-cis-12-octadecenoate, trans-10,cis-12-CLA, cis-9,trans-11-CLA, trans-9,trans-11-CLA, oleate and trans-10-octadecenoate during linoleate metabolism. Is also able to hydrate palmitoleic acid (cis-9-hexadecenoic acid), oleic acid, alpha-linolenic acid, gamma-linolenic acid, and stearidonic acid into the corresponding 10-hydroxy fatty acids, and dehydrate 10-hydroxy-cis-12,cis-15-octadecadienoic acid, 10-hydroxy-cis-6,cis-12-octadecadienoic acid, and 10-hydroxyoctadecanoic acid into the corresponding fatty acids with cis double bonds at the Delta9 position. As part of the gut microbiome, this enzyme modifies host fatty acid composition and is expected to improve human health by altering lipid metabolism related to the onset of metabolic syndrome. Shows regioselectivity for Delta9 double bond hydration, generating C10 hydroxy groups in the (S)-configuration with high enantioselectivity, when another double bond is in position 12. Is not able to hydrate fatty acids with a trans carbon-carbon double bond at Delta9 position (elaidic acid, trans-9-octadecenoic acid), fatty acid esters (methyl linoleate, monolinolein, dilinolein, and trilinolein), and conjugated fatty acids (conjugated linoleic acids), as well as fatty acids with other chain lengths, such as myristoleic acid (cis-9-tetradecenoic acid), arachidonic acid (cis-5,cis-8,cis-11,cis-14-eicosatetraenoic acid), EPA (cis-5,cis-8,cis-11,cis-14,cis-17-eicosapentaenoic acid), DHA (cis-4,cis-7,cis-10,cis-13,cis-16,cis-19-docosahexaenoic acid) and fatty acids with a cis carbon-carbon double bond at Delta11 position, such as cis-vaccenic acid and cis-11-octadecenoic acid, or fatty alcohols, such as linoleyl alcohol. Is not able to dehydrate 12-hydroxy, 3-hydroxy, and 9-hydroxy fatty acids. The polypeptide is Linoleate hydratase (Lactiplantibacillus plantarum (Lactobacillus plantarum)).